The sequence spans 189 residues: HTH-type transcriptional repressor LfrR (189 aa).

An HTH tetR-type domain is found at 12 to 70 (ERTRRAILDAAMLVLADHPTAALGDIAAAAGVGRSTVHRYYPERTDLLRALARHVHDLS). A DNA-binding region (H-T-H motif) is located at residues 33–52 (ALGDIAAAAGVGRSTVHRYY). The tract at residues 70-71 (SN) is proflavine binding.

In terms of assembly, homodimer. Forms a structurally asymmetric homodimer exhibiting local unfolding and a blocked drug-binding site.

Repressor activity is regulated by binding of different substrates of the LfrA multidrug efflux pump, such as acriflavine, proflavine, ethidium bromide and rhodamine 123. Binding of these ligands causes the dissociation of LfrR from the promoter, inducing lfrA expression. In terms of biological role, represses the transcription of the lfrRA operon by binding directly to the promoter region of lfrR-lfrA. Binds specifically to a 143-bp region upstream of the lfrR gene. In Mycolicibacterium smegmatis (strain ATCC 700084 / mc(2)155) (Mycobacterium smegmatis), this protein is HTH-type transcriptional repressor LfrR.